Consider the following 105-residue polypeptide: Class I hydrophobin 1 (105 aa).

The signal sequence occupies residues 1–18; that stretch reads MAFIKSLLIASVAAVAFA. Disulfide bonds link C42-C83, C50-C76, C51-C62, and C84-C100.

This sequence belongs to the fungal hydrophobin family. In terms of assembly, self-assembles to form functional amyloid fibrils called rodlets. Self-assembly into fibrillar rodlets occurs spontaneously at hydrophobic:hydrophilic interfaces and the rodlets further associate laterally to form amphipathic monolayers.

It localises to the secreted. The protein localises to the cell wall. Its function is as follows. Aerial growth, conidiation, and dispersal of filamentous fungi in the environment rely upon a capability of their secreting small amphipathic proteins called hydrophobins (HPBs) with low sequence identity. Class I can self-assemble into an outermost layer of rodlet bundles on aerial cell surfaces, conferring cellular hydrophobicity that supports fungal growth, development and dispersal; whereas Class II form highly ordered films at water-air interfaces through intermolecular interactions but contribute nothing to the rodlet structure. In Davidiella tassiana (Mycosphaerella tassiana), this protein is Class I hydrophobin 1.